Consider the following 457-residue polypeptide: Metal tolerance protein C4 (457 aa).

Topologically, residues 1-115 (MQSSHRILSR…IEINDQHSQR (115 aa)) are cytoplasmic. The helical transmembrane segment at 116-136 (AVTTALWCNFLVFSLKFGVWW) threads the bilayer. Residues 137–141 (TSSSH) are Vacuolar-facing. A helical transmembrane segment spans residues 142–162 (VIMAEVVHSVADFANQALLAY). Residues 163–183 (GLSSSRRAPDALHPYGYSKER) lie on the Cytoplasmic side of the membrane. The helical transmembrane segment at 184–204 (FVWSLISAVGIFCLGSGATIV) threads the bilayer. Residues 205-220 (NGVQNLWTSSPPPNME) are Vacuolar-facing. A helical membrane pass occupies residues 221 to 241 (LAAVVIGGSFLIEGASLLVAI). At 242–267 (QSVKKGAAQEGMTIRDYIWRGHDPTS) the chain is on the cytoplasmic side. A helical transmembrane segment spans residues 268-288 (VAVMTEDGAAVAGLAIAAASL). The Vacuolar segment spans residues 289 to 297 (VAVRMTGNP). A helical transmembrane segment spans residues 298 to 318 (IYDPIGSIVVGNLLGMVAIFL). At 319-457 (IQRNRHALIG…HNPTPTDPSL (139 aa)) the chain is on the cytoplasmic side.

Belongs to the cation diffusion facilitator (CDF) transporter (TC 2.A.4) family.

Its subcellular location is the vacuole membrane. Functionally, involved in sequestration of excess metal in the cytoplasm into vacuoles to maintain metal homeostasis. The polypeptide is Metal tolerance protein C4 (MTPC4) (Arabidopsis thaliana (Mouse-ear cress)).